A 1404-amino-acid polypeptide reads, in one-letter code: DNA-directed RNA polymerase subunit beta' (1404 aa).

Residues Cys-70, Cys-72, Cys-85, and Cys-88 each contribute to the Zn(2+) site. Residues Asp-460, Asp-462, and Asp-464 each contribute to the Mg(2+) site. Zn(2+)-binding residues include Cys-814, Cys-888, Cys-895, and Cys-898.

This sequence belongs to the RNA polymerase beta' chain family. The RNAP catalytic core consists of 2 alpha, 1 beta, 1 beta' and 1 omega subunit. When a sigma factor is associated with the core the holoenzyme is formed, which can initiate transcription. Requires Mg(2+) as cofactor. Zn(2+) is required as a cofactor.

It catalyses the reaction RNA(n) + a ribonucleoside 5'-triphosphate = RNA(n+1) + diphosphate. DNA-dependent RNA polymerase catalyzes the transcription of DNA into RNA using the four ribonucleoside triphosphates as substrates. The polypeptide is DNA-directed RNA polymerase subunit beta' (Shewanella halifaxensis (strain HAW-EB4)).